The chain runs to 197 residues: Large ribosomal subunit protein uL5 (197 aa).

The protein belongs to the universal ribosomal protein uL5 family. In terms of assembly, part of the 50S ribosomal subunit; contacts the 5S rRNA and probably tRNA. Forms a bridge to the 30S subunit in the 70S ribosome.

This is one of the proteins that bind and probably mediate the attachment of the 5S RNA into the large ribosomal subunit, where it forms part of the central protuberance. In the 70S ribosome it contacts protein S13 of the 30S subunit (bridge B1b), connecting the 2 subunits; this bridge is implicated in subunit movement. May contact the P site tRNA; the 5S rRNA and some of its associated proteins might help stabilize positioning of ribosome-bound tRNAs. The polypeptide is Large ribosomal subunit protein uL5 (Caldivirga maquilingensis (strain ATCC 700844 / DSM 13496 / JCM 10307 / IC-167)).